The primary structure comprises 705 residues: Elongation factor G (705 aa).

The tr-type G domain occupies 8–294 (ELYRNFGIMA…SVIDYLPSPL (287 aa)). GTP contacts are provided by residues 17-24 (AHIDAGKT), 92-96 (DTPGH), and 146-149 (NKMD).

It belongs to the TRAFAC class translation factor GTPase superfamily. Classic translation factor GTPase family. EF-G/EF-2 subfamily.

The protein localises to the cytoplasm. Its function is as follows. Catalyzes the GTP-dependent ribosomal translocation step during translation elongation. During this step, the ribosome changes from the pre-translocational (PRE) to the post-translocational (POST) state as the newly formed A-site-bound peptidyl-tRNA and P-site-bound deacylated tRNA move to the P and E sites, respectively. Catalyzes the coordinated movement of the two tRNA molecules, the mRNA and conformational changes in the ribosome. This chain is Elongation factor G, found in Cereibacter sphaeroides (strain KD131 / KCTC 12085) (Rhodobacter sphaeroides).